The chain runs to 134 residues: Cytochrome b (134 aa).

The next 3 helical transmembrane spans lie at 33–53 (FGSL…FLAM), 77–98 (WVLR…YVHV), and 113–133 (WNVG…GYVL). Positions 83 and 97 each coordinate heme b.

Belongs to the cytochrome b family. In terms of assembly, the cytochrome bc1 complex contains 11 subunits: 3 respiratory subunits (MT-CYB, CYC1 and UQCRFS1), 2 core proteins (UQCRC1 and UQCRC2) and 6 low-molecular weight proteins (UQCRH/QCR6, UQCRB/QCR7, UQCRQ/QCR8, UQCR10/QCR9, UQCR11/QCR10 and a cleavage product of UQCRFS1). This cytochrome bc1 complex then forms a dimer. It depends on heme b as a cofactor.

Its subcellular location is the mitochondrion inner membrane. Functionally, component of the ubiquinol-cytochrome c reductase complex (complex III or cytochrome b-c1 complex) that is part of the mitochondrial respiratory chain. The b-c1 complex mediates electron transfer from ubiquinol to cytochrome c. Contributes to the generation of a proton gradient across the mitochondrial membrane that is then used for ATP synthesis. The chain is Cytochrome b (MT-CYB) from Anoura caudifer (Hairy-legged long-tongued bat).